Reading from the N-terminus, the 880-residue chain is Alanine--tRNA ligase (880 aa).

Residues His-566, His-570, Cys-668, and His-672 each coordinate Zn(2+).

The protein belongs to the class-II aminoacyl-tRNA synthetase family. Zn(2+) serves as cofactor.

It localises to the cytoplasm. The catalysed reaction is tRNA(Ala) + L-alanine + ATP = L-alanyl-tRNA(Ala) + AMP + diphosphate. In terms of biological role, catalyzes the attachment of alanine to tRNA(Ala) in a two-step reaction: alanine is first activated by ATP to form Ala-AMP and then transferred to the acceptor end of tRNA(Ala). Also edits incorrectly charged Ser-tRNA(Ala) and Gly-tRNA(Ala) via its editing domain. The polypeptide is Alanine--tRNA ligase (Alkaliphilus oremlandii (strain OhILAs) (Clostridium oremlandii (strain OhILAs))).